The primary structure comprises 373 residues: Alanine dehydrogenase (373 aa).

Substrate is bound by residues Arg-15 and Lys-75. His-96 functions as the Proton donor/acceptor in the catalytic mechanism. Residues Ser-134, 178-179 (IV), Asp-198, Ser-220, 239-240 (VL), 267-270 (VAID), Arg-280, and 299-302 (VANI) each bind NAD(+). Asp-270 (proton donor/acceptor) is an active-site residue.

It belongs to the AlaDH/PNT family. Homohexamer. Trimer of dimer.

It is found in the cytoplasm. The catalysed reaction is L-alanine + NAD(+) + H2O = pyruvate + NH4(+) + NADH + H(+). It participates in amino-acid degradation; L-alanine degradation via dehydrogenase pathway; NH(3) and pyruvate from L-alanine: step 1/1. Catalyzes the reversible reductive amination of pyruvate to L-alanine. This enzyme is a key factor in the assimilation of L-alanine as an energy source through the tricarboxylic acid cycle. This Methanococcus maripaludis (strain DSM 14266 / JCM 13030 / NBRC 101832 / S2 / LL) protein is Alanine dehydrogenase.